The primary structure comprises 214 residues: Leucyl/phenylalanyl-tRNA--protein transferase (214 aa).

The protein belongs to the L/F-transferase family.

Its subcellular location is the cytoplasm. It carries out the reaction N-terminal L-lysyl-[protein] + L-leucyl-tRNA(Leu) = N-terminal L-leucyl-L-lysyl-[protein] + tRNA(Leu) + H(+). The enzyme catalyses N-terminal L-arginyl-[protein] + L-leucyl-tRNA(Leu) = N-terminal L-leucyl-L-arginyl-[protein] + tRNA(Leu) + H(+). It catalyses the reaction L-phenylalanyl-tRNA(Phe) + an N-terminal L-alpha-aminoacyl-[protein] = an N-terminal L-phenylalanyl-L-alpha-aminoacyl-[protein] + tRNA(Phe). Functions in the N-end rule pathway of protein degradation where it conjugates Leu, Phe and, less efficiently, Met from aminoacyl-tRNAs to the N-termini of proteins containing an N-terminal arginine or lysine. The polypeptide is Leucyl/phenylalanyl-tRNA--protein transferase (Cereibacter sphaeroides (strain ATCC 17029 / ATH 2.4.9) (Rhodobacter sphaeroides)).